The following is a 256-amino-acid chain: DNA repair protein RecO (256 aa).

This sequence belongs to the RecO family.

In terms of biological role, involved in DNA repair and RecF pathway recombination. This is DNA repair protein RecO from Pelotomaculum thermopropionicum (strain DSM 13744 / JCM 10971 / SI).